The following is a 686-amino-acid chain: tRNA wybutosine-synthesizing protein 4 (686 aa).

Residues 1-10 (MGPRSRERRA) show a composition bias toward basic and acidic residues. Residues 1–21 (MGPRSRERRAGAVQNTNDSSA) are disordered. Residues R59, G89, D114, 161 to 162 (DL), and E188 each bind S-adenosyl-L-methionine.

It belongs to the methyltransferase superfamily. LCMT family. Interacts with RNF144B/IBRDC2.

The enzyme catalyses 7-[(3S)-3-amino-3-carboxypropyl]wyosine(37) in tRNA(Phe) + S-adenosyl-L-methionine = 7-[(3S)-(3-amino-3-methoxycarbonyl)propyl]wyosine(37) in tRNA(Phe) + S-adenosyl-L-homocysteine. The catalysed reaction is 7-[(3S)-(3-amino-3-methoxycarbonyl)propyl]wyosine(37) in tRNA(Phe) + S-adenosyl-L-methionine + CO2 = wybutosine(37) in tRNA(Phe) + S-adenosyl-L-homocysteine + 2 H(+). The protein operates within tRNA modification; wybutosine-tRNA(Phe) biosynthesis. Probable S-adenosyl-L-methionine-dependent methyltransferase that acts as a component of the wybutosine biosynthesis pathway. Wybutosine is a hyper modified guanosine with a tricyclic base found at the 3'-position adjacent to the anticodon of eukaryotic phenylalanine tRNA. May methylate the carboxyl group of leucine residues to form alpha-leucine ester residues. This Homo sapiens (Human) protein is tRNA wybutosine-synthesizing protein 4 (LCMT2).